Here is a 684-residue protein sequence, read N- to C-terminus: RNA helicase NPH-II (684 aa).

In terms of domain architecture, Helicase ATP-binding spans 184 to 359; sequence FRAWAARRPT…EFFPDAEFVH (176 aa). Position 197 to 204 (197 to 204) interacts with ATP; that stretch reads GGTGVGKT. A DEXH box motif is present at residues 308–311; the sequence is DEVH. Positions 392–563 constitute a Helicase C-terminal domain; the sequence is NVSAALSAHR…DLYVQPSDLE (172 aa).

Belongs to the DEAD box helicase family. DEAH subfamily. Monomer.

The protein localises to the virion. The enzyme catalyses ATP + H2O = ADP + phosphate + H(+). NTP-dependent helicase that catalyzes unidirectional unwinding of 3'tailed duplex RNAs and plays an important role during transcription of early mRNAs, presumably by preventing R-loop formation behind the elongating RNA polymerase. Might also play a role in the export of newly synthesized mRNA chains out of the core into the cytoplasm. Required for replication and propagation of viral particles. In Homo sapiens (Human), this protein is RNA helicase NPH-II (NPH2).